The sequence spans 300 residues: Ribosomal protein L11 methyltransferase (300 aa).

Positions 148, 171, 193, and 235 each coordinate S-adenosyl-L-methionine.

The protein belongs to the methyltransferase superfamily. PrmA family.

Its subcellular location is the cytoplasm. It catalyses the reaction L-lysyl-[protein] + 3 S-adenosyl-L-methionine = N(6),N(6),N(6)-trimethyl-L-lysyl-[protein] + 3 S-adenosyl-L-homocysteine + 3 H(+). Functionally, methylates ribosomal protein L11. This Desulfotalea psychrophila (strain LSv54 / DSM 12343) protein is Ribosomal protein L11 methyltransferase.